The following is a 178-amino-acid chain: Signal peptidase complex subunit 2 (178 aa).

At 1 to 37 (MSSAKPINVYSIPELNQALDEALPSVFARLNYERSYA) the chain is on the cytoplasmic side. A helical membrane pass occupies residues 38–58 (LLDAKLYIGYSIAVVAGLSFF). Over 59-67 (LDKKFERDQ) the chain is Lumenal. The helical transmembrane segment at 68–88 (IVTYQKLLVGAYFVLSLLFWY) threads the bilayer. Topologically, residues 89 to 178 (FSRFIEKGTV…HNVLDTKKNE (90 aa)) are cytoplasmic.

Belongs to the SPCS2 family. As to quaternary structure, component of the signal peptidase complex (SPC) composed of a catalytic subunit SEC11 and three accessory subunits SPC1, SPC2 and SPC3. The complex induces a local thinning of the ER membrane which is used to measure the length of the signal peptide (SP) h-region of protein substrates. This ensures the selectivity of the complex towards h-regions shorter than 18-20 amino acids. SPC associates with the translocon complex. Interacts with SBH1 and SEB2/SBH2.

The protein resides in the endoplasmic reticulum membrane. Component of the signal peptidase complex (SPC) which catalyzes the cleavage of N-terminal signal sequences from nascent proteins as they are translocated into the lumen of the endoplasmic reticulum. Enhances the enzymatic activity of SPC and facilitates the interactions between different components of the translocation site. The chain is Signal peptidase complex subunit 2 (SPC2) from Saccharomyces cerevisiae (strain ATCC 204508 / S288c) (Baker's yeast).